The following is a 223-amino-acid chain: MTQDEMKQAVARAAIDYVVAGEIIGVGTGSTANFFIDELGKIKDRIKGAVASSEATAERLRAHGITIFDLNDIDSMSVYIDGADEITAQGAMIKGGGAALTREKIVASVAKKFVCIADGSKLVDKLGKFPLPVEVIPMAQAVVARKLAALGGEPRLRVKDGKAVVTDNGCYIIDVLGLQIEDPATLEAQINDIVGVVTVGLFARRGADIALLGTADGVNSLSF.

Substrate contacts are provided by residues 28–31 (TGST), 81–84 (DGAD), and 94–97 (KGGG). Glutamate 103 functions as the Proton acceptor in the catalytic mechanism. Lysine 121 contacts substrate.

It belongs to the ribose 5-phosphate isomerase family. Homodimer.

It catalyses the reaction aldehydo-D-ribose 5-phosphate = D-ribulose 5-phosphate. Its pathway is carbohydrate degradation; pentose phosphate pathway; D-ribose 5-phosphate from D-ribulose 5-phosphate (non-oxidative stage): step 1/1. Its function is as follows. Catalyzes the reversible conversion of ribose-5-phosphate to ribulose 5-phosphate. The sequence is that of Ribose-5-phosphate isomerase A from Janthinobacterium sp. (strain Marseille) (Minibacterium massiliensis).